The following is a 234-amino-acid chain: uncharacterized protein (234 aa).

A run of 7 helical transmembrane segments spans residues 25–45 (LMGA…TFFL), 57–77 (LFFL…QGLA), 85–105 (LPIF…TLLM), 108–128 (ATDI…LSVY), 142–162 (AFGV…FFAS), 163–183 (TGLT…LIAW), and 203–223 (WAIS…LFLL).

It belongs to the BI1 family.

The protein localises to the cell membrane. This is an uncharacterized protein from Lactococcus lactis subsp. lactis (strain IL1403) (Streptococcus lactis).